The primary structure comprises 105 residues: Large ribosomal subunit protein uL24 (105 aa).

Belongs to the universal ribosomal protein uL24 family. In terms of assembly, part of the 50S ribosomal subunit.

Functionally, one of two assembly initiator proteins, it binds directly to the 5'-end of the 23S rRNA, where it nucleates assembly of the 50S subunit. One of the proteins that surrounds the polypeptide exit tunnel on the outside of the subunit. In Aeromonas hydrophila subsp. hydrophila (strain ATCC 7966 / DSM 30187 / BCRC 13018 / CCUG 14551 / JCM 1027 / KCTC 2358 / NCIMB 9240 / NCTC 8049), this protein is Large ribosomal subunit protein uL24.